The sequence spans 241 residues: Probable transcriptional regulatory protein Rmet_0785 (241 aa).

This sequence belongs to the TACO1 family.

The protein resides in the cytoplasm. The sequence is that of Probable transcriptional regulatory protein Rmet_0785 from Cupriavidus metallidurans (strain ATCC 43123 / DSM 2839 / NBRC 102507 / CH34) (Ralstonia metallidurans).